Consider the following 110-residue polypeptide: MRIEDPFQNIFGVVRIAIDKIKELEQRGQIYGLSRFLPNSIIVMKTIDYPLIVDLYIPGFTFYFQFSIIQDQQTKQIFIDDFRVVYPQPYAKQINSTANFELSEEENEDE.

This is an uncharacterized protein from Sulfolobus islandicus rod-shaped virus 1 (SIRV-1).